Consider the following 584-residue polypeptide: Optineurin (584 aa).

Residues 1–32 (MSHQPLSCLTEKGDSPCETPGNGPSNMVHPSL) are disordered. Residues 38 to 180 (EELLQQMKEL…VSELQLKLNS (143 aa)) adopt a coiled-coil conformation. The interaction with Rab8 stretch occupies residues 58–219 (MKLNNQAMKG…TPTRTDPISL (162 aa)). Positions 186–191 (DSFVEI) match the LIR motif. Residue serine 187 is modified to Phosphoserine. 2 coiled-coil regions span residues 243 to 278 (CLRE…HSST) and 307 to 511 (IQVT…DIEE). Basic and acidic residues predominate over residues 267–295 (DFEKKANGHSSTEKQTARRADREKEDKGQ). The tract at residues 267-302 (DFEKKANGHSSTEKQTARRADREKEDKGQESVGSEV) is disordered. The residue at position 345 (serine 345) is a Phosphoserine. The segment at 414-584 (TKQQAEKVDK…LQIHVMDCII (171 aa)) is interaction with HD. The tract at residues 415–524 (KQQAEKVDKM…RQSLMEMQCR (110 aa)) is interaction with MYO6. The UBAN motif lies at 477-482 (DFHAER). Position 530 is a phosphoserine (serine 530). A CCHC NOA-type zinc finger spans residues 554–584 (PRSIPIHSCPKCGEVLPDIDTLQIHVMDCII). Residues cysteine 562, cysteine 565, histidine 578, and cysteine 582 each coordinate Zn(2+).

Self-associates. Interacts with HD, GTF3A, TRAF3, TBK1 and MYO6. Interacts (via UBAN) with ubiquitinated TFRC. Interacts with active GTP-bound Rab8 (RAB8A and/or RAB8B). Interacts with TBC1D17. Binds to linear ubiquitin chains. Interacts with LC3 family members MAP1LC3A, MAP1LC3B, GABARAP, GABARAPL1 and GABARAPL2; OPTN phosphorylation increases the association (at least with MAP1LC3B). Interacts with RAB12; the interaction may be indirect. Interacts with TBK1; this interaction leads to the Golgi localization of TBK1 and its subsequent activation. Interacts with palmitoyltransferase ZDHHC17/HIP14; the interaction does not lead to palmitoylation of OPTN. Interacts with CYLD. Interacts with TOM1; the interaction is indirect and is mediated by MYO6, which acts as a bridge between TOM1 and OPTN. Interacts with USP12; the interaction is independent of USP12 deubiquitinase activity and may be involved in regulation of autophagic flux. Phosphorylated by TBK1, leading to restrict bacterial proliferation in case of infection. In terms of tissue distribution, in eye, it is expressed in anterior segment, retina, and optic nerve blood vessels (at protein level). Highly expressed in adult liver, heart and testis.

The protein localises to the cytoplasm. It is found in the perinuclear region. It localises to the golgi apparatus. Its subcellular location is the trans-Golgi network. The protein resides in the cytoplasmic vesicle. The protein localises to the autophagosome. It is found in the recycling endosome. Functionally, plays an important role in the maintenance of the Golgi complex, in membrane trafficking, in exocytosis, through its interaction with myosin VI and Rab8. Links myosin VI to the Golgi complex and plays an important role in Golgi ribbon formation. Plays a role in the activation of innate immune response during viral infection. Mechanistically, recruits TBK1 at the Golgi apparatus, promoting its trans-phosphorylation after RLR or TLR3 stimulation. In turn, activated TBK1 phosphorylates its downstream partner IRF3 to produce IFN-beta. Plays a neuroprotective role in the eye and optic nerve. May act by regulating membrane trafficking and cellular morphogenesis via a complex that contains Rab8 and huntingtin (HD). Mediates the interaction of Rab8 with the probable GTPase-activating protein TBC1D17 during Rab8-mediated endocytic trafficking, such as that of transferrin receptor (TFRC/TfR); regulates Rab8 recruitment to tubules emanating from the endocytic recycling compartment. Autophagy receptor that interacts directly with both the cargo to become degraded and an autophagy modifier of the MAP1 LC3 family; targets ubiquitin-coated bacteria (xenophagy), such as cytoplasmic Salmonella enterica, and appears to function in the same pathway as SQSTM1 and CALCOCO2/NDP52. In Mus musculus (Mouse), this protein is Optineurin (Optn).